Consider the following 297-residue polypeptide: Proline iminopeptidase (297 aa).

The AB hydrolase-1 domain occupies 26–131 (VLLLHGGPAM…GLLVSNMMAS (106 aa)). Residue Ser-103 is the Nucleophile of the active site. Asp-243 is an active-site residue. His-270 acts as the Proton donor in catalysis.

It belongs to the peptidase S33 family. As to quaternary structure, monomer.

The catalysed reaction is Release of N-terminal proline from a peptide.. Releases the N-terminal proline from various substrates. The chain is Proline iminopeptidase (fpaP) from Flavobacterium johnsoniae (strain ATCC 17061 / DSM 2064 / JCM 8514 / BCRC 14874 / CCUG 350202 / NBRC 14942 / NCIMB 11054 / UW101) (Cytophaga johnsonae).